A 436-amino-acid polypeptide reads, in one-letter code: Histidinol dehydrogenase (436 aa).

NAD(+) is bound by residues Tyr135, Gln196, and Asn219. Positions 242, 264, and 267 each coordinate substrate. Positions 264 and 267 each coordinate Zn(2+). Catalysis depends on proton acceptor residues Glu332 and His333. Substrate is bound by residues His333, Asp366, Glu420, and His425. Residue Asp366 coordinates Zn(2+). Residue His425 participates in Zn(2+) binding.

Belongs to the histidinol dehydrogenase family. Requires Zn(2+) as cofactor.

The catalysed reaction is L-histidinol + 2 NAD(+) + H2O = L-histidine + 2 NADH + 3 H(+). It functions in the pathway amino-acid biosynthesis; L-histidine biosynthesis; L-histidine from 5-phospho-alpha-D-ribose 1-diphosphate: step 9/9. In terms of biological role, catalyzes the sequential NAD-dependent oxidations of L-histidinol to L-histidinaldehyde and then to L-histidine. In Methylococcus capsulatus (strain ATCC 33009 / NCIMB 11132 / Bath), this protein is Histidinol dehydrogenase.